Consider the following 746-residue polypeptide: Exostosin-1 (746 aa).

At 1–7 the chain is on the cytoplasmic side; that stretch reads MQAKKRY. A helical; Signal-anchor for type II membrane protein transmembrane segment spans residues 8-28; it reads FILLSAGSCLALLFYFGGLQF. Residues 29–746 lie on the Lumenal side of the membrane; the sequence is RASRSHSRRE…RKKYRDIERL (718 aa). An N-linked (GlcNAc...) asparagine glycan is attached at Asn-89. Cystine bridges form between Cys-98–Cys-103 and Cys-109–Cys-152. Leu-166 and Tyr-203 together coordinate a protein. Lys-267, Lys-269, Tyr-271, and Arg-280 together coordinate UDP. A disulfide bridge links Cys-298 with Cys-312. His-300 serves as a coordination point for a protein. 2 residues coordinate UDP: Tyr-319 and Tyr-324. Asn-330 carries N-linked (GlcNAc...) asparagine glycosylation. Intrachain disulfides connect Cys-334/Cys-355 and Cys-652/Cys-704. UDP-binding residues include Arg-346 and Glu-349.

It belongs to the glycosyltransferase 47 family. As to quaternary structure, part of the heparan sulfate polymerase, a dimeric complex composed of EXT1 and EXT2. Could also form homooligomeric complexes. Interacts with NDST1. Post-translationally, N-glycosylated.

The protein localises to the golgi apparatus membrane. The protein resides in the golgi apparatus. It localises to the cis-Golgi network membrane. It is found in the endoplasmic reticulum membrane. The enzyme catalyses 3-O-{alpha-D-GlcNAc-[(1-&gt;4)-beta-D-GlcA-(1-&gt;4)-alpha-D-GlcNAc](n)-(1-&gt;4)-beta-D-GlcA-(1-&gt;3)-beta-D-Gal-(1-&gt;3)-beta-D-Gal-(1-&gt;4)-beta-D-Xyl}-L-seryl-[protein] + UDP-alpha-D-glucuronate = 3-O-{[(1-&gt;4)-beta-D-GlcA-(1-&gt;4)-alpha-D-GlcNAc](n+1)-(1-&gt;4)-beta-D-GlcA-(1-&gt;3)-beta-D-Gal-(1-&gt;3)-beta-D-Gal-(1-&gt;4)-beta-D-Xyl}-L-seryl-[protein] + UDP + H(+). The protein operates within protein modification; protein glycosylation. Glycosyltransferase forming with EXT2 the heterodimeric heparan sulfate polymerase which catalyzes the elongation of the heparan sulfate glycan backbone. Glycan backbone extension consists in the alternating transfer of (1-&gt;4)-beta-D-GlcA and (1-&gt;4)-alpha-D-GlcNAc residues from their respective UDP-sugar donors. Both EXT1 and EXT2 are required for the full activity of the polymerase since EXT1 bears the N-acetylglucosaminyl-proteoglycan 4-beta-glucuronosyltransferase activity within the complex while EXT2 carries the glucuronosyl-N-acetylglucosaminyl-proteoglycan 4-alpha-N-acetylglucosaminyltransferase activity. Heparan sulfate proteoglycans are ubiquitous components of the extracellular matrix and play an important role in tissue homeostasis and signaling. The chain is Exostosin-1 (EXT1) from Papio anubis (Olive baboon).